Consider the following 56-residue polypeptide: Male determiner protein Yob (56 aa).

Functionally, male determiner protein (M-factor) that controls male somatic sexual differentiation. Acts as a dominant factor that regulates the mRNA splicing of doublesex (dsx) transcripts and promotes expression of male splice forms of dsx. The protein is Male determiner protein Yob of Anopheles gambiae (African malaria mosquito).